A 223-amino-acid chain; its full sequence is MHVLIPAAGSGRRMEAGKNKLLIDLEGESLIYWTLKSVFSASLVSWVGIIGQPNDKKKLLNSVKKFSNEIEWINGGNTRQESVFNGLNSLPSNAEKVLIHDGARCLINPDLINKCALELEENDAVILATKVTDTIKIVDNEGYIQQTPNRQNLWAAQTPQGFLVKKLREAHEMAIEKNWKVTDDASLFEMLNWQVRIIEGNSSNIKITSPLDLQIAKLFLKDY.

It belongs to the IspD/TarI cytidylyltransferase family. IspD subfamily.

The catalysed reaction is 2-C-methyl-D-erythritol 4-phosphate + CTP + H(+) = 4-CDP-2-C-methyl-D-erythritol + diphosphate. It functions in the pathway isoprenoid biosynthesis; isopentenyl diphosphate biosynthesis via DXP pathway; isopentenyl diphosphate from 1-deoxy-D-xylulose 5-phosphate: step 2/6. In terms of biological role, catalyzes the formation of 4-diphosphocytidyl-2-C-methyl-D-erythritol from CTP and 2-C-methyl-D-erythritol 4-phosphate (MEP). The sequence is that of 2-C-methyl-D-erythritol 4-phosphate cytidylyltransferase from Prochlorococcus marinus (strain MIT 9515).